We begin with the raw amino-acid sequence, 618 residues long: Structural protein ORF618 (618 aa).

Residues 570-598 (ILEAKRQIEDRAKGLSKNLDNTVTEIMNA) are a coiled coil.

The protein resides in the virion. This chain is Structural protein ORF618, found in Acidianus two-tailed virus (ATV).